A 185-amino-acid polypeptide reads, in one-letter code: uncharacterized protein (185 aa).

A chloroplast-targeting transit peptide spans methionine 1–asparagine 56. Positions arginine 48–asparagine 67 are disordered. The span at serine 52–serine 64 shows a compositional bias: polar residues. A coiled-coil region spans residues glutamine 105–glutamine 138.

The protein resides in the plastid. It localises to the chloroplast. It is found in the plastoglobule. This is an uncharacterized protein from Arabidopsis thaliana (Mouse-ear cress).